The following is a 160-amino-acid chain: Single-stranded DNA-binding protein 3 (160 aa).

The SSB domain occupies 2 to 104; it reads MNRVVLVGRL…IVAESVQFLE (103 aa). Positions 106–133 are enriched in polar residues; sequence KQNGAGGSTSNNNQSETNYSNDNKTSSY. Residues 106–160 are disordered; sequence KQNGAGGSTSNNNQSETNYSNDNKTSSYRADRSQNGDSFANEGAPVDINPDDLPF.

As to quaternary structure, homotetramer.

In Listeria innocua serovar 6a (strain ATCC BAA-680 / CLIP 11262), this protein is Single-stranded DNA-binding protein 3 (ssb3).